The chain runs to 365 residues: DNA replication and repair protein RecF (365 aa).

30-37 (GQNGSGKT) contacts ATP.

The protein belongs to the RecF family.

It is found in the cytoplasm. Its function is as follows. The RecF protein is involved in DNA metabolism; it is required for DNA replication and normal SOS inducibility. RecF binds preferentially to single-stranded, linear DNA. It also seems to bind ATP. The polypeptide is DNA replication and repair protein RecF (Shewanella woodyi (strain ATCC 51908 / MS32)).